Consider the following 160-residue polypeptide: Small ribosomal subunit protein bS6 (160 aa).

The protein belongs to the bacterial ribosomal protein bS6 family.

Binds together with bS18 to 16S ribosomal RNA. This Ureaplasma parvum serovar 3 (strain ATCC 27815 / 27 / NCTC 11736) protein is Small ribosomal subunit protein bS6.